A 472-amino-acid polypeptide reads, in one-letter code: Glutamine synthetase (472 aa).

One can recognise a GS beta-grasp domain in the interval 13–101; that stretch reads SKARFVDLRF…TCDVIDPADG (89 aa). The 365-residue stretch at 108–472 folds into the GS catalytic domain; that stretch reads PRSIARRAEA…PLEFEMYYSL (365 aa). Positions 133 and 135 each coordinate Mg(2+). E211 provides a ligand contact to ATP. Mg(2+)-binding residues include E216 and E224. Residues 268 to 269 and G269 each bind L-glutamate; that span reads NG. H273 serves as a coordination point for Mg(2+). Residues 275 to 277 and S277 contribute to the ATP site; that span reads HQS. L-glutamate is bound by residues R325, E331, and R343. Residues R343, R348, and K356 each coordinate ATP. Residue E361 coordinates Mg(2+). R363 contributes to the L-glutamate binding site. Y401 is modified (O-AMP-tyrosine).

It belongs to the glutamine synthetase family. As to quaternary structure, oligomer of 12 subunits arranged in the form of two hexameric ring. Mg(2+) serves as cofactor.

It localises to the cytoplasm. It carries out the reaction L-glutamate + NH4(+) + ATP = L-glutamine + ADP + phosphate + H(+). The activity of this enzyme could be controlled by adenylation under conditions of abundant glutamine. Its function is as follows. Catalyzes the ATP-dependent biosynthesis of glutamine from glutamate and ammonia. The polypeptide is Glutamine synthetase (Neisseria gonorrhoeae).